Consider the following 464-residue polypeptide: Rhodopsin (464 aa).

Residues 1–33 lie on the Extracellular side of the membrane; sequence MGRDIPDNETWWYNPTMEVHPHWKQFNQVPDAV. Asn8 is a glycosylation site (N-linked (GlcNAc...) asparagine). Residues 34-58 form a helical membrane-spanning segment; sequence YYSLGIFIGICGIIGCTGNGIVIYL. The Cytoplasmic segment spans residues 59–70; that stretch reads FTKTKSLQTPAN. The helical transmembrane segment at 71–97 threads the bilayer; it reads MFIINLAFSDFTFSLVNGFPLMTISCF. Topologically, residues 98–109 are extracellular; the sequence is IKKWVFGMAACK. Cys108 and Cys186 are joined by a disulfide. Residues 110 to 131 form a helical membrane-spanning segment; that stretch reads VYGFIGGIFGLMSIMTMSMISI. Residues 132–134 carry the 'Ionic lock' involved in activated form stabilization motif; it reads DRY. The Cytoplasmic segment spans residues 132–151; sequence DRYNVIGRPMAASKKMSHRR. Residues 152-172 traverse the membrane as a helical segment; it reads AFLMIIFVWMWSTLWSIGPIF. Topologically, residues 173-199 are extracellular; sequence GWGAYVLEGVLCNCSFDYITRDSATRS. The chain crosses the membrane as a helical span at residues 200–224; the sequence is NIVCMYIFAFCFPILIIFFCYFNIV. Residues 225–261 lie on the Cytoplasmic side of the membrane; it reads MAVSNHEKEMAAMAKRLNAKELRKAQAGASAEMKLAK. A helical membrane pass occupies residues 262–283; that stretch reads ISIVIVTQFLLSWSPYAVVALL. At 284–293 the chain is on the extracellular side; sequence AQFGPIEWVT. Residues 294–315 traverse the membrane as a helical segment; that stretch reads PYAAQLPVMFAKASAIHNPLIY. The residue at position 305 (Lys305) is an N6-(retinylidene)lysine. Over 316-464 the chain is Cytoplasmic; that stretch reads SVSHPKFREA…QGVDNQAYQA (149 aa). 2 S-palmitoyl cysteine lipidation sites follow: Cys336 and Cys337. The interval 344-464 is disordered; that stretch reads VEDDKDAETE…QGVDNQAYQA (121 aa). Over residues 367–401 the composition is skewed to low complexity; it reads AAQMKEMMAMMQKMQQQQAAYPPQGAYPPQGGYPP. Pro residues-rich tracts occupy residues 416 to 425 and 434 to 452; these read QGYPPPPQGY and QGYP…PQAA.

The protein belongs to the G-protein coupled receptor 1 family. Opsin subfamily. In terms of processing, contains one covalently linked retinal chromophore. Upon light absorption, the covalently bound 11-cis-retinal is converted to all-trans-retinal. After hydrolysis of the Schiff base and release of the covalently bound all-trans-retinal, active rhodopsin is regenerated by binding of a fresh molecule of 11-cis-retinal.

It localises to the cell projection. Its subcellular location is the rhabdomere membrane. Its function is as follows. Photoreceptor required for image-forming vision at low light intensity. Light-induced isomerization of 11-cis to all-trans retinal triggers a conformational change that activates signaling via G-proteins. Signaling mediates the activation of phospholipase C. Subsequent receptor phosphorylation mediates displacement of the bound G-protein alpha subunit by arrestin and terminates signaling. This chain is Rhodopsin (RHO), found in Sepia officinalis (Common cuttlefish).